The chain runs to 353 residues: UDP-3-O-acylglucosamine N-acyltransferase (353 aa).

The Proton acceptor role is filled by H258.

This sequence belongs to the transferase hexapeptide repeat family. LpxD subfamily. In terms of assembly, homotrimer.

The enzyme catalyses a UDP-3-O-[(3R)-3-hydroxyacyl]-alpha-D-glucosamine + a (3R)-hydroxyacyl-[ACP] = a UDP-2-N,3-O-bis[(3R)-3-hydroxyacyl]-alpha-D-glucosamine + holo-[ACP] + H(+). It functions in the pathway bacterial outer membrane biogenesis; LPS lipid A biosynthesis. Catalyzes the N-acylation of UDP-3-O-acylglucosamine using 3-hydroxyacyl-ACP as the acyl donor. Is involved in the biosynthesis of lipid A, a phosphorylated glycolipid that anchors the lipopolysaccharide to the outer membrane of the cell. This Parvibaculum lavamentivorans (strain DS-1 / DSM 13023 / NCIMB 13966) protein is UDP-3-O-acylglucosamine N-acyltransferase.